The chain runs to 575 residues: Developmental and secondary metabolism regulator VEL1 (575 aa).

The Velvet domain maps to 21 to 225; the sequence is GRKLKYTLTV…AEQGCRVRIR (205 aa). Positions 35-40 match the Nuclear localization signal motif; sequence ERARAC. Disordered stretches follow at residues 36–56 and 227–402; these read RARACGSGAKSSADRRPVDPP and DVRM…QSYE. The span at 274–284 shows a compositional bias: basic and acidic residues; sequence VHEDPQQRRGS. The segment covering 294 to 308 has biased composition (polar residues); sequence VVNTPFRTPSISPST. Pro residues predominate over residues 334–346; the sequence is IQPPHPPPPPPSS. 2 stretches are compositionally biased toward polar residues: residues 355–365 and 385–402; these read HHNQGPSTQFR and SYSQFRPPTNPSQQQSYE. Positions 465-509 are PEST; that stretch reads AEQPLAMSPLASVTSISRGTQNSAPMPSHNYNKLERSGSYSQYAP. Positions 513 to 549 are disordered; sequence EAPKSTNKRSFNDVFSTPTESLSNGRRPSAIGIDIEE. Residues 516–538 show a composition bias toward polar residues; it reads KSTNKRSFNDVFSTPTESLSNGR.

Belongs to the velvet family. VeA subfamily. As to quaternary structure, component of the heterotrimeric velvet complex composed of LAE1, VEL1 and VEL2; VEL1 acting as a bridging protein between LAE1 and VEL2.

The protein localises to the nucleus. It localises to the cytoplasm. In terms of biological role, component of the velvet transcription factor complex that controls sexual/asexual developmental ratio in response to light, promoting sexual development in the darkness while stimulating asexual sporulation under illumination. The velvet complex hat acts as a global regulator for secondary metabolite gene expression. Controls the expression of the oxalic acid and melanin gene clusters. Also controls the expression of proteases and carbohydrate-active enzymes. Involved in the resistance to oxidative stress. Required for full virulence. The sequence is that of Developmental and secondary metabolism regulator VEL1 from Botryotinia fuckeliana (strain B05.10) (Noble rot fungus).